A 145-amino-acid chain; its full sequence is 3-dehydroquinate dehydratase (145 aa).

The active-site Proton acceptor is Y24. Substrate contacts are provided by N75, H81, and D88. H101 acts as the Proton donor in catalysis. Substrate contacts are provided by residues 102 to 103 (IS) and R112.

The protein belongs to the type-II 3-dehydroquinase family. In terms of assembly, homododecamer.

The catalysed reaction is 3-dehydroquinate = 3-dehydroshikimate + H2O. It participates in metabolic intermediate biosynthesis; chorismate biosynthesis; chorismate from D-erythrose 4-phosphate and phosphoenolpyruvate: step 3/7. In terms of biological role, catalyzes a trans-dehydration via an enolate intermediate. This Corynebacterium glutamicum (strain R) protein is 3-dehydroquinate dehydratase.